An 88-amino-acid chain; its full sequence is Small ribosomal subunit protein bS20 (88 aa).

Residues 1-23 (MPNTKSAEKALRVADANRQENRR) are compositionally biased toward basic and acidic residues. 2 disordered regions span residues 1-28 (MPNTKSAEKALRVADANRQENRRAKSQV) and 69-88 (PKNAARRKSRLMKKLNQAAK). Basic residues predominate over residues 71–81 (NAARRKSRLMK).

Belongs to the bacterial ribosomal protein bS20 family.

Functionally, binds directly to 16S ribosomal RNA. This is Small ribosomal subunit protein bS20 from Dehalococcoides mccartyi (strain ATCC BAA-2266 / KCTC 15142 / 195) (Dehalococcoides ethenogenes (strain 195)).